The following is an 82-amino-acid chain: Putative membrane protein insertion efficiency factor (82 aa).

Belongs to the UPF0161 family.

The protein resides in the cell inner membrane. In terms of biological role, could be involved in insertion of integral membrane proteins into the membrane. The polypeptide is Putative membrane protein insertion efficiency factor (Rickettsia africae (strain ESF-5)).